Consider the following 90-residue polypeptide: Elongation factor 1-beta (90 aa).

It belongs to the EF-1-beta/EF-1-delta family.

Promotes the exchange of GDP for GTP in EF-1-alpha/GDP, thus allowing the regeneration of EF-1-alpha/GTP that could then be used to form the ternary complex EF-1-alpha/GTP/AAtRNA. The sequence is that of Elongation factor 1-beta from Staphylothermus marinus (strain ATCC 43588 / DSM 3639 / JCM 9404 / F1).